We begin with the raw amino-acid sequence, 166 residues long: UPF0304 protein VS_1049 (166 aa).

It belongs to the UPF0304 family.

The chain is UPF0304 protein VS_1049 from Vibrio atlanticus (strain LGP32) (Vibrio splendidus (strain Mel32)).